The sequence spans 391 residues: Pectin acetylesterase 7 (391 aa).

Positions 1–23 are cleaved as a signal peptide; the sequence is MGRLKQCWSSLLVLAVLVIGTGA. Residues Ser171, Asp267, and His334 each act as charge relay system in the active site.

Belongs to the pectinacetylesterase family.

It localises to the secreted. The protein localises to the cell wall. Its function is as follows. Hydrolyzes acetyl esters in homogalacturonan regions of pectin. In type I primary cell wall, galacturonic acid residues of pectin can be acetylated at the O-2 and O-3 positions. Decreasing the degree of acetylation of pectin gels in vitro alters their physical properties. In Arabidopsis thaliana (Mouse-ear cress), this protein is Pectin acetylesterase 7.